The following is a 397-amino-acid chain: Phosphoglycerate kinase (397 aa).

Residues 21-23 (DFN), Arg-37, 60-63 (HLGR), Arg-119, and Arg-152 each bind substrate. ATP is bound by residues Lys-203, Gly-294, Glu-325, and 354 to 357 (GGDS).

The protein belongs to the phosphoglycerate kinase family. Monomer.

Its subcellular location is the cytoplasm. The catalysed reaction is (2R)-3-phosphoglycerate + ATP = (2R)-3-phospho-glyceroyl phosphate + ADP. The protein operates within carbohydrate degradation; glycolysis; pyruvate from D-glyceraldehyde 3-phosphate: step 2/5. This is Phosphoglycerate kinase from Chlorobium phaeobacteroides (strain BS1).